The chain runs to 124 residues: Small ribosomal subunit protein uS13 (124 aa).

The disordered stretch occupies residues 95-124; it reads GLPVRGQRTRHNARTRKGPRKTVGAKKGKR. Positions 101–124 are enriched in basic residues; that stretch reads QRTRHNARTRKGPRKTVGAKKGKR.

The protein belongs to the universal ribosomal protein uS13 family. As to quaternary structure, part of the 30S ribosomal subunit. Forms a loose heterodimer with protein S19. Forms two bridges to the 50S subunit in the 70S ribosome.

Functionally, located at the top of the head of the 30S subunit, it contacts several helices of the 16S rRNA. In the 70S ribosome it contacts the 23S rRNA (bridge B1a) and protein L5 of the 50S subunit (bridge B1b), connecting the 2 subunits; these bridges are implicated in subunit movement. Contacts the tRNAs in the A and P-sites. This chain is Small ribosomal subunit protein uS13, found in Coprothermobacter proteolyticus (strain ATCC 35245 / DSM 5265 / OCM 4 / BT).